Here is a 288-residue protein sequence, read N- to C-terminus: ATP synthase gamma chain (288 aa).

The protein belongs to the ATPase gamma chain family. In terms of assembly, F-type ATPases have 2 components, CF(1) - the catalytic core - and CF(0) - the membrane proton channel. CF(1) has five subunits: alpha(3), beta(3), gamma(1), delta(1), epsilon(1). CF(0) has three main subunits: a, b and c.

The protein localises to the cell inner membrane. Functionally, produces ATP from ADP in the presence of a proton gradient across the membrane. The gamma chain is believed to be important in regulating ATPase activity and the flow of protons through the CF(0) complex. The chain is ATP synthase gamma chain from Paracidovorax citrulli (strain AAC00-1) (Acidovorax citrulli).